Here is a 127-residue protein sequence, read N- to C-terminus: 13 kDa ribonucleoprotein-associated protein (127 aa).

Belongs to the eukaryotic ribosomal protein eL8 family. In terms of assembly, component of the U3 snoRNP particle. Binds to the C'/D and B/C motifs in U3 snoRNA. Component of the 25S U4/U6.U5 tri-snRNP particle, a subcomplex of the spliceosome. Binds to the 5' stem-loop of U4 snRNA.

The protein resides in the nucleus. The protein localises to the nucleolus. Functionally, common component of the spliceosome and rRNA processing machinery. In association with the spliceosomal U4/U6.U5 tri-snRNP particle, required for splicing of pre-mRNA. In association with box C/D snoRNPs, required for processing of pre-ribosomal RNA (rRNA) and site-specific 2'-O-methylation of substrate RNAs. Essential for the accumulation and stability of U4 snRNA, U6 snRNA, and box C/D snoRNAs. In Eremothecium gossypii (strain ATCC 10895 / CBS 109.51 / FGSC 9923 / NRRL Y-1056) (Yeast), this protein is 13 kDa ribonucleoprotein-associated protein (SNU13).